The primary structure comprises 231 residues: Flagellar L-ring protein (231 aa).

Positions 1-18 (MNRFICVLALSGSAVLAG) are cleaved as a signal peptide. Cys-19 carries the N-palmitoyl cysteine lipid modification. The S-diacylglycerol cysteine moiety is linked to residue Cys-19.

The protein belongs to the FlgH family. In terms of assembly, the basal body constitutes a major portion of the flagellar organelle and consists of four rings (L,P,S, and M) mounted on a central rod.

It localises to the cell outer membrane. The protein resides in the bacterial flagellum basal body. In terms of biological role, assembles around the rod to form the L-ring and probably protects the motor/basal body from shearing forces during rotation. The chain is Flagellar L-ring protein from Pseudomonas fluorescens (strain ATCC BAA-477 / NRRL B-23932 / Pf-5).